A 309-amino-acid chain; its full sequence is MDVGQKKRGADKTALATTDEQGALSKPTWIRAKAPISPEVGRLTGILRDLHLHTVCEEASCPNLGECFKRGTATFMIMGDVCTRRCPFCDVAHGRPAALDTEEPGHLADAIGAMKLKYVVITSVTRDDLEDGGAAHFAQCIESIRKKTEGVKVEILVPDFRGHVDAALKNLGNCLPDVFNHNLETVPRLYAESRPGARYHESLRLLQRFKETYPGIPTKSGLMLGLGETDEEILEVMRDLRVHGCDMLTIGQYLRPSRHHLPVQRYVTPEQFEAFRVAGLKMGFSQVASGPLVRSSYHADLQAKEVLHT.

Residues Cys56, Cys61, Cys67, Cys82, Cys86, Cys89, and Ser296 each coordinate [4Fe-4S] cluster. One can recognise a Radical SAM core domain in the interval 68–285; the sequence is FKRGTATFMI…RVAGLKMGFS (218 aa).

The protein belongs to the radical SAM superfamily. Lipoyl synthase family. Requires [4Fe-4S] cluster as cofactor.

Its subcellular location is the cytoplasm. The enzyme catalyses [[Fe-S] cluster scaffold protein carrying a second [4Fe-4S](2+) cluster] + N(6)-octanoyl-L-lysyl-[protein] + 2 oxidized [2Fe-2S]-[ferredoxin] + 2 S-adenosyl-L-methionine + 4 H(+) = [[Fe-S] cluster scaffold protein] + N(6)-[(R)-dihydrolipoyl]-L-lysyl-[protein] + 4 Fe(3+) + 2 hydrogen sulfide + 2 5'-deoxyadenosine + 2 L-methionine + 2 reduced [2Fe-2S]-[ferredoxin]. It participates in protein modification; protein lipoylation via endogenous pathway; protein N(6)-(lipoyl)lysine from octanoyl-[acyl-carrier-protein]: step 2/2. Functionally, catalyzes the radical-mediated insertion of two sulfur atoms into the C-6 and C-8 positions of the octanoyl moiety bound to the lipoyl domains of lipoate-dependent enzymes, thereby converting the octanoylated domains into lipoylated derivatives. The protein is Lipoyl synthase of Syntrophotalea carbinolica (strain DSM 2380 / NBRC 103641 / GraBd1) (Pelobacter carbinolicus).